Reading from the N-terminus, the 278-residue chain is Biotin synthase (278 aa).

The 227-residue stretch at Met-1–Arg-227 folds into the Radical SAM core domain. 3 residues coordinate [4Fe-4S] cluster: Cys-16, Cys-20, and Cys-23. Residues Cys-60, Cys-95, and Cys-153 each coordinate [2Fe-2S] cluster.

This sequence belongs to the radical SAM superfamily. Biotin synthase family. Homodimer. The cofactor is [4Fe-4S] cluster. It depends on [2Fe-2S] cluster as a cofactor.

It catalyses the reaction (4R,5S)-dethiobiotin + (sulfur carrier)-SH + 2 reduced [2Fe-2S]-[ferredoxin] + 2 S-adenosyl-L-methionine = (sulfur carrier)-H + biotin + 2 5'-deoxyadenosine + 2 L-methionine + 2 oxidized [2Fe-2S]-[ferredoxin]. It functions in the pathway cofactor biosynthesis; biotin biosynthesis; biotin from 7,8-diaminononanoate: step 2/2. Functionally, catalyzes the conversion of dethiobiotin (DTB) to biotin by the insertion of a sulfur atom into dethiobiotin via a radical-based mechanism. The polypeptide is Biotin synthase (Campylobacter jejuni (strain RM1221)).